The following is a 276-amino-acid chain: CASP-like protein 4A3 (276 aa).

A compositionally biased stretch (polar residues) spans 1–13 (MPSMSPSSISTEK). Residues 1-76 (MPSMSPSSIS…PVKIEETPSP (76 aa)) form a disordered region. Residues 1–126 (MPSMSPSSIS…RRSRREEIVK (126 aa)) are Cytoplasmic-facing. Over residues 43 to 72 (SLDHSSDSEKEDEKRRPESRRNKNPVKIEE) the composition is skewed to basic and acidic residues. The chain crosses the membrane as a helical span at residues 127 to 147 (FVALGFRLSEVVLALISFSIM). Residues 148-167 (AADKTKGWSGDSFDRYKEYR) lie on the Extracellular side of the membrane. Residues 168–188 (FCLSVNVVAFIYASFQACDLA) traverse the membrane as a helical segment. The Cytoplasmic segment spans residues 189–205 (YHLVKEKHLISHHLRPL). A helical transmembrane segment spans residues 206-226 (FEFIIDQVLAYLLMCASTAAV). Topologically, residues 227–244 (TRVDDWVSNWGKDDFTEM) are extracellular. A helical transmembrane segment spans residues 245-265 (ASASIAMSFLTFLAFAFSSLI). Topologically, residues 266-276 (SGYNLFNQDSL) are cytoplasmic.

The protein belongs to the Casparian strip membrane proteins (CASP) family. In terms of assembly, homodimer and heterodimers.

It is found in the cell membrane. This Arabidopsis lyrata subsp. lyrata (Lyre-leaved rock-cress) protein is CASP-like protein 4A3.